We begin with the raw amino-acid sequence, 65 residues long: Crotamine (65 aa).

The N-terminal stretch at 1–22 (MKILYLLFAFLFLAFLSEPGNA) is a signal peptide. 2 consecutive short sequence motifs (nuclear localization signal) follow at residues 24–40 (KQCHKKGGHCFPKEKIC) and 49–61 (KMDCRWRWKCCKK). Disulfide bonds link Cys-26–Cys-58, Cys-33–Cys-52, and Cys-40–Cys-59.

The protein belongs to the crotamine-myotoxin family. As to quaternary structure, monomer. In terms of tissue distribution, expressed by the venom gland.

The protein resides in the secreted. Functionally, cationic peptide that possesses multiple functions. It acts as a cell-penetrating peptide (CPP), and as a potent voltage-gated potassium channel inhibitor. It exhibits antimicrobial activities, hind limb paralysis, and severe muscle necrosis by a non-enzymatic mechanism. As a cell-penetrating peptide, crotamine has high specificity for actively proliferating cells, and interacts inside the cell with subcellular and subnuclear structures, like vesicular compartments, chromosomes and centrioles. It penetrates into the cells as fast as five minutes after its addition to cell culture medium. In vivo, after intraperitoneal administration, it is found in cells of peritoneal fluid and bone marrow, demonstrating preferential nuclear and perinuclear localization. To enter the cell, it interacts with the chains of heparan sulfate membrane proteoglycan (HSPG), and is endocytosed (in complex with HSPG) in vesicles which are transported into the cell with the help of clathrin. Inside the cell, crotamine accumulates in lysosomal vesicles. As soon as the peptide accumulates in endosomes/lysosomes vesicles, these compartments are disrupted and their contents released into the cytosol. This loss of lysosomal content induces cell death at high concentrations, or promotes the distribution of crotamine in cytoplasmic compartments, which is a step before crotamine nuclear uptake. As a potassium channel inhibitor, this toxin selectively inhibits Kv1.1/KCNA1, Kv1.2/KCNA2 and Kv1.3/KCNA3 channels with an IC(50) of 369, 386 and 287 nM, respectively. The inhibition of Kv1.3/KCNA channels induced by this toxin occurs rapidly and is voltage-independent. The channel inhibition is reversible after washing, suggesting a pure and classical channel blockage effect, without effects in potassium channel kinetics. As an antimicrobial peptide, crotamine shows antibacterial activity against E.coli and B.subtilis, and antifungal activity against Candida spp., Trichosporon spp. and C.neoformans. It kills bacteria through membrane permeabilization. The sequence is that of Crotamine (CRO2) from Crotalus durissus terrificus (South American rattlesnake).